Here is a 132-residue protein sequence, read N- to C-terminus: Small ribosomal subunit protein uS9 (132 aa).

The protein belongs to the universal ribosomal protein uS9 family.

The sequence is that of Small ribosomal subunit protein uS9 from Baumannia cicadellinicola subsp. Homalodisca coagulata.